The chain runs to 746 residues: Protein psiN (746 aa).

An N-terminal signal peptide occupies residues 1 to 23 (MGNINKKLFYFLIQLITILIVLS). Residues 24-679 (DDSYNSLLPL…KCQSAAVKAA (656 aa)) lie on the Extracellular side of the membrane. N-linked (GlcNAc...) asparagine glycans are attached at residues Asn-97 and Asn-124. Residues 125 to 276 (VTSDDPRIYS…YDYCGVCEGM (152 aa)) form the PA14 domain. N-linked (GlcNAc...) asparagine glycans are attached at residues Asn-319, Asn-353, Asn-380, Asn-477, Asn-553, Asn-628, and Asn-654. Residues 680–700 (VGVGAGAAAGIAIGGAIALGL) form a helical membrane-spanning segment. Residues 701 to 746 (AAFGGKRGYDAWKSSRDNQIQTSSENPLYNPNPNQGDNPLYAANNS) are Cytoplasmic-facing. The disordered stretch occupies residues 714–746 (SSRDNQIQTSSENPLYNPNPNQGDNPLYAANNS). The segment covering 717–746 (DNQIQTSSENPLYNPNPNQGDNPLYAANNS) has biased composition (polar residues).

Belongs to the prespore-cell-inducing factor family.

It localises to the membrane. The chain is Protein psiN (psiN) from Dictyostelium discoideum (Social amoeba).